The chain runs to 138 residues: Phosphoribosyl-AMP cyclohydrolase (138 aa).

Mg(2+) is bound at residue D84. C85 provides a ligand contact to Zn(2+). Positions 86 and 88 each coordinate Mg(2+). C102 and C109 together coordinate Zn(2+).

Belongs to the PRA-CH family. In terms of assembly, homodimer. Mg(2+) serves as cofactor. Requires Zn(2+) as cofactor.

The protein resides in the cytoplasm. The catalysed reaction is 1-(5-phospho-beta-D-ribosyl)-5'-AMP + H2O = 1-(5-phospho-beta-D-ribosyl)-5-[(5-phospho-beta-D-ribosylamino)methylideneamino]imidazole-4-carboxamide. It participates in amino-acid biosynthesis; L-histidine biosynthesis; L-histidine from 5-phospho-alpha-D-ribose 1-diphosphate: step 3/9. Functionally, catalyzes the hydrolysis of the adenine ring of phosphoribosyl-AMP. The sequence is that of Phosphoribosyl-AMP cyclohydrolase from Burkholderia ambifaria (strain ATCC BAA-244 / DSM 16087 / CCUG 44356 / LMG 19182 / AMMD) (Burkholderia cepacia (strain AMMD)).